The following is a 603-amino-acid chain: Elongation factor 4 (603 aa).

The tr-type G domain maps to 7 to 189 (VRIRNFCIIA…AVVERVPPPP (183 aa)). Residues 19-24 (DHGKST) and 136-139 (NKID) contribute to the GTP site.

It belongs to the TRAFAC class translation factor GTPase superfamily. Classic translation factor GTPase family. LepA subfamily.

The protein localises to the cell inner membrane. The catalysed reaction is GTP + H2O = GDP + phosphate + H(+). Its function is as follows. Required for accurate and efficient protein synthesis under certain stress conditions. May act as a fidelity factor of the translation reaction, by catalyzing a one-codon backward translocation of tRNAs on improperly translocated ribosomes. Back-translocation proceeds from a post-translocation (POST) complex to a pre-translocation (PRE) complex, thus giving elongation factor G a second chance to translocate the tRNAs correctly. Binds to ribosomes in a GTP-dependent manner. The sequence is that of Elongation factor 4 from Nostoc sp. (strain PCC 7120 / SAG 25.82 / UTEX 2576).